Consider the following 135-residue polypeptide: Translation initiation factor 2 subunit beta (135 aa).

This sequence belongs to the eIF-2-beta/eIF-5 family. Heterotrimer composed of an alpha, a beta and a gamma chain.

In terms of biological role, eIF-2 functions in the early steps of protein synthesis by forming a ternary complex with GTP and initiator tRNA. This chain is Translation initiation factor 2 subunit beta (eif2b), found in Methanothermobacter thermautotrophicus (strain ATCC 29096 / DSM 1053 / JCM 10044 / NBRC 100330 / Delta H) (Methanobacterium thermoautotrophicum).